We begin with the raw amino-acid sequence, 362 residues long: 3-dehydroquinate synthase (362 aa).

Residues 70–75 (EGEQYK), 104–108 (GVIGD), 128–129 (TT), Lys-141, Lys-150, and 168–171 (TLTT) each bind NAD(+). The Zn(2+) site is built by Glu-183, His-246, and His-263.

The protein belongs to the sugar phosphate cyclases superfamily. Dehydroquinate synthase family. The cofactor is Co(2+). Zn(2+) is required as a cofactor. Requires NAD(+) as cofactor.

The protein resides in the cytoplasm. It carries out the reaction 7-phospho-2-dehydro-3-deoxy-D-arabino-heptonate = 3-dehydroquinate + phosphate. Its pathway is metabolic intermediate biosynthesis; chorismate biosynthesis; chorismate from D-erythrose 4-phosphate and phosphoenolpyruvate: step 2/7. Catalyzes the conversion of 3-deoxy-D-arabino-heptulosonate 7-phosphate (DAHP) to dehydroquinate (DHQ). This chain is 3-dehydroquinate synthase, found in Histophilus somni (strain 129Pt) (Haemophilus somnus).